The chain runs to 305 residues: Ribosomal protein L11 methyltransferase (305 aa).

S-adenosyl-L-methionine is bound by residues Thr155, Gly176, Asp198, and Asn241.

This sequence belongs to the methyltransferase superfamily. PrmA family.

The protein resides in the cytoplasm. The enzyme catalyses L-lysyl-[protein] + 3 S-adenosyl-L-methionine = N(6),N(6),N(6)-trimethyl-L-lysyl-[protein] + 3 S-adenosyl-L-homocysteine + 3 H(+). Its function is as follows. Methylates ribosomal protein L11. This Carboxydothermus hydrogenoformans (strain ATCC BAA-161 / DSM 6008 / Z-2901) protein is Ribosomal protein L11 methyltransferase.